The chain runs to 341 residues: Glycerol-3-phosphate dehydrogenase [NAD(P)+] (341 aa).

The NADPH site is built by S14, F15, R35, and K108. The sn-glycerol 3-phosphate site is built by K108 and G136. An NADPH-binding site is contributed by A140. Residues K191, D244, S254, R255, and N256 each contribute to the sn-glycerol 3-phosphate site. K191 acts as the Proton acceptor in catalysis. An NADPH-binding site is contributed by R255. NADPH is bound by residues V279 and E281.

It belongs to the NAD-dependent glycerol-3-phosphate dehydrogenase family.

The protein resides in the cytoplasm. It carries out the reaction sn-glycerol 3-phosphate + NAD(+) = dihydroxyacetone phosphate + NADH + H(+). The catalysed reaction is sn-glycerol 3-phosphate + NADP(+) = dihydroxyacetone phosphate + NADPH + H(+). The protein operates within membrane lipid metabolism; glycerophospholipid metabolism. Catalyzes the reduction of the glycolytic intermediate dihydroxyacetone phosphate (DHAP) to sn-glycerol 3-phosphate (G3P), the key precursor for phospholipid synthesis. The polypeptide is Glycerol-3-phosphate dehydrogenase [NAD(P)+] (Pseudomonas entomophila (strain L48)).